We begin with the raw amino-acid sequence, 627 residues long: 2-oxoacid:ferredoxin oxidoreductase 1, subunit alpha (627 aa).

A YPITP motif motif is present at residues 253 to 257; that stretch reads YPITP. T256 and R344 together coordinate substrate.

As to quaternary structure, heterodimer composed of an alpha and a beta subunit.

It carries out the reaction a 2-oxocarboxylate + 2 oxidized [2Fe-2S]-[ferredoxin] + CoA = an acyl-CoA + 2 reduced [2Fe-2S]-[ferredoxin] + CO2 + H(+). With respect to regulation, inhibited by low concentration of 4-fluoro-7-nitrobenzofurazan (NBD-F). Its function is as follows. Catalyzes the coenzyme A-dependent oxidative decarboxylation of different 2-oxoacids such as 2-oxoglutarate, pyruvate and 2-oxobutyrate to form their CoA derivatives. In Sulfurisphaera tokodaii (strain DSM 16993 / JCM 10545 / NBRC 100140 / 7) (Sulfolobus tokodaii), this protein is 2-oxoacid:ferredoxin oxidoreductase 1, subunit alpha.